The following is a 309-amino-acid chain: Methionyl-tRNA formyltransferase (309 aa).

Residue 109–112 (SLLP) coordinates (6S)-5,6,7,8-tetrahydrofolate.

The protein belongs to the Fmt family.

It catalyses the reaction L-methionyl-tRNA(fMet) + (6R)-10-formyltetrahydrofolate = N-formyl-L-methionyl-tRNA(fMet) + (6S)-5,6,7,8-tetrahydrofolate + H(+). Attaches a formyl group to the free amino group of methionyl-tRNA(fMet). The formyl group appears to play a dual role in the initiator identity of N-formylmethionyl-tRNA by promoting its recognition by IF2 and preventing the misappropriation of this tRNA by the elongation apparatus. In Chloroflexus aggregans (strain MD-66 / DSM 9485), this protein is Methionyl-tRNA formyltransferase.